Reading from the N-terminus, the 214-residue chain is Glucose-6-phosphate isomerase (214 aa).

The Fe cation site is built by His92, His94, Glu101, and His140.

It belongs to the archaeal-type GPI family. As to quaternary structure, homodimer.

It is found in the cytoplasm. The enzyme catalyses alpha-D-glucose 6-phosphate = beta-D-fructose 6-phosphate. It functions in the pathway carbohydrate degradation; glycolysis; D-glyceraldehyde 3-phosphate and glycerone phosphate from D-glucose: step 2/4. The polypeptide is Glucose-6-phosphate isomerase (Sinorhizobium medicae (strain WSM419) (Ensifer medicae)).